Here is a 209-residue protein sequence, read N- to C-terminus: Kynurenine formamidase (209 aa).

W20 lines the substrate pocket. H50, H54, and D56 together coordinate Zn(2+). H60 (proton donor/acceptor) is an active-site residue. Residues H161 and E173 each contribute to the Zn(2+) site.

Belongs to the Cyclase 1 superfamily. KynB family. In terms of assembly, homodimer. The cofactor is Zn(2+).

The enzyme catalyses N-formyl-L-kynurenine + H2O = L-kynurenine + formate + H(+). Its pathway is amino-acid degradation; L-tryptophan degradation via kynurenine pathway; L-kynurenine from L-tryptophan: step 2/2. Functionally, catalyzes the hydrolysis of N-formyl-L-kynurenine to L-kynurenine, the second step in the kynurenine pathway of tryptophan degradation. The polypeptide is Kynurenine formamidase (Bacillus cereus (strain ZK / E33L)).